The primary structure comprises 601 residues: Elongation factor 4 (601 aa).

Residues 7-189 (SNIRNFSIVA…AIVHRLPPPQ (183 aa)) enclose the tr-type G domain. Residues 19-24 (DHGKST) and 136-139 (NKVD) each bind GTP.

This sequence belongs to the TRAFAC class translation factor GTPase superfamily. Classic translation factor GTPase family. LepA subfamily.

The protein resides in the cell inner membrane. The catalysed reaction is GTP + H2O = GDP + phosphate + H(+). Required for accurate and efficient protein synthesis under certain stress conditions. May act as a fidelity factor of the translation reaction, by catalyzing a one-codon backward translocation of tRNAs on improperly translocated ribosomes. Back-translocation proceeds from a post-translocation (POST) complex to a pre-translocation (PRE) complex, thus giving elongation factor G a second chance to translocate the tRNAs correctly. Binds to ribosomes in a GTP-dependent manner. This is Elongation factor 4 from Rhodopseudomonas palustris (strain BisB18).